The following is a 192-amino-acid chain: Cytidylate kinase (192 aa).

An ATP-binding site is contributed by 7-15 (GPAGSGKST).

Belongs to the cytidylate kinase family. Type 2 subfamily.

It localises to the cytoplasm. The enzyme catalyses CMP + ATP = CDP + ADP. It catalyses the reaction dCMP + ATP = dCDP + ADP. The protein is Cytidylate kinase of Natronomonas pharaonis (strain ATCC 35678 / DSM 2160 / CIP 103997 / JCM 8858 / NBRC 14720 / NCIMB 2260 / Gabara) (Halobacterium pharaonis).